The primary structure comprises 695 residues: Elongation factor G (695 aa).

The tr-type G domain occupies 8–282 (EKTRNIGIMA…AVLDYLPAPT (275 aa)). GTP-binding positions include 17 to 24 (AHIDAGKT), 81 to 85 (DTPGH), and 135 to 138 (NKMD).

It belongs to the TRAFAC class translation factor GTPase superfamily. Classic translation factor GTPase family. EF-G/EF-2 subfamily.

It is found in the cytoplasm. Catalyzes the GTP-dependent ribosomal translocation step during translation elongation. During this step, the ribosome changes from the pre-translocational (PRE) to the post-translocational (POST) state as the newly formed A-site-bound peptidyl-tRNA and P-site-bound deacylated tRNA move to the P and E sites, respectively. Catalyzes the coordinated movement of the two tRNA molecules, the mRNA and conformational changes in the ribosome. The protein is Elongation factor G of Listeria monocytogenes serotype 4b (strain CLIP80459).